Consider the following 146-residue polypeptide: Ribosome maturation factor RimP (146 aa).

The protein belongs to the RimP family.

The protein resides in the cytoplasm. Its function is as follows. Required for maturation of 30S ribosomal subunits. This Helicobacter pylori (strain G27) protein is Ribosome maturation factor RimP.